The primary structure comprises 824 residues: Probable acyl-CoA dehydrogenase IBR3 (824 aa).

Gly-2 carries the post-translational modification N-acetylglycine. FAD is bound by residues 555–565 (FAMTEPQVASS), 589–591 (WTS), Arg-706, Gln-776, and 776–780 (QVHGA). A Microbody targeting signal motif is present at residues 822–824 (SKL).

Belongs to the acyl-CoA dehydrogenase family. FAD is required as a cofactor.

It localises to the peroxisome. The catalysed reaction is a 2,3-saturated acyl-CoA + A = a 2,3-dehydroacyl-CoA + AH2. Its function is as follows. Involved with IBR1 and IBR10 in the peroxisomal beta-oxidation of indole-3-butyric acid (IBA) to form indole-3-acetic acid (IAA), a biologically active auxin. May be responsible for catalyzing the first step in IBA-CoA beta-oxidation. May play a role in defense response to pathogenic bacteria. This is Probable acyl-CoA dehydrogenase IBR3 from Arabidopsis thaliana (Mouse-ear cress).